The primary structure comprises 278 residues: Pantothenate synthetase (278 aa).

An ATP-binding site is contributed by 28 to 35 (MGNLHAGH). The active-site Proton donor is the His-35. Gln-59 contacts (R)-pantoate. Gln-59 provides a ligand contact to beta-alanine. An ATP-binding site is contributed by 145–148 (GKKD). Gln-151 serves as a coordination point for (R)-pantoate. 182–185 (LSSR) is an ATP binding site.

Belongs to the pantothenate synthetase family. In terms of assembly, homodimer.

The protein resides in the cytoplasm. The enzyme catalyses (R)-pantoate + beta-alanine + ATP = (R)-pantothenate + AMP + diphosphate + H(+). It functions in the pathway cofactor biosynthesis; (R)-pantothenate biosynthesis; (R)-pantothenate from (R)-pantoate and beta-alanine: step 1/1. Its function is as follows. Catalyzes the condensation of pantoate with beta-alanine in an ATP-dependent reaction via a pantoyl-adenylate intermediate. This Methylobacillus flagellatus (strain ATCC 51484 / DSM 6875 / VKM B-1610 / KT) protein is Pantothenate synthetase.